The following is a 263-amino-acid chain: Ribosomal RNA large subunit methyltransferase E (263 aa).

S-adenosyl-L-methionine contacts are provided by Gly50, Trp52, Asp68, Asn84, and Asp109. Lys149 functions as the Proton acceptor in the catalytic mechanism. The TRAM domain maps to 196 to 254 (PLRKGDKFVVDIEKLGSSGDGAVLIEGFVVFVKEVEVGEKVRIKITDVKPNFAFADVAE).

It belongs to the class I-like SAM-binding methyltransferase superfamily. RNA methyltransferase RlmE family.

The protein resides in the cytoplasm. The catalysed reaction is uridine(2552) in 23S rRNA + S-adenosyl-L-methionine = 2'-O-methyluridine(2552) in 23S rRNA + S-adenosyl-L-homocysteine + H(+). In terms of biological role, specifically methylates the uridine in position 2552 of 23S rRNA at the 2'-O position of the ribose in the fully assembled 50S ribosomal subunit. In Methanosarcina barkeri (strain Fusaro / DSM 804), this protein is Ribosomal RNA large subunit methyltransferase E.